A 291-amino-acid chain; its full sequence is ATP synthase gamma chain (291 aa).

It belongs to the ATPase gamma chain family. In terms of assembly, F-type ATPases have 2 components, CF(1) - the catalytic core - and CF(0) - the membrane proton channel. CF(1) has five subunits: alpha(3), beta(3), gamma(1), delta(1), epsilon(1). CF(0) has three main subunits: a, b and c.

It localises to the cell inner membrane. In terms of biological role, produces ATP from ADP in the presence of a proton gradient across the membrane. The gamma chain is believed to be important in regulating ATPase activity and the flow of protons through the CF(0) complex. This chain is ATP synthase gamma chain, found in Methylibium petroleiphilum (strain ATCC BAA-1232 / LMG 22953 / PM1).